A 92-amino-acid chain; its full sequence is Small ribosomal subunit protein uS19 (92 aa).

The protein belongs to the universal ribosomal protein uS19 family.

Functionally, protein S19 forms a complex with S13 that binds strongly to the 16S ribosomal RNA. The chain is Small ribosomal subunit protein uS19 from Agrobacterium fabrum (strain C58 / ATCC 33970) (Agrobacterium tumefaciens (strain C58)).